An 848-amino-acid polypeptide reads, in one-letter code: Trimethylamine-N-oxide reductase 1 (848 aa).

A signal peptide (tat-type signal) is located at residues 1–39 (MNNNDLFQASRRRFLAQLGGLTVAGMLGPSLLTSRRATA). Ser-191 lines the Mo-bis(molybdopterin guanine dinucleotide) pocket.

The protein belongs to the prokaryotic molybdopterin-containing oxidoreductase family. As to quaternary structure, interacts with the N-terminal domain of TorC. Requires Mo-bis(molybdopterin guanine dinucleotide) as cofactor. In terms of processing, predicted to be exported by the Tat system. The position of the signal peptide cleavage has not been experimentally proven.

The protein localises to the periplasm. The enzyme catalyses trimethylamine + 2 Fe(III)-[cytochrome c] + H2O = trimethylamine N-oxide + 2 Fe(II)-[cytochrome c] + 3 H(+). In terms of biological role, reduces trimethylamine-N-oxide (TMAO) into trimethylamine; an anaerobic reaction coupled to energy-yielding reactions. The polypeptide is Trimethylamine-N-oxide reductase 1 (torA) (Escherichia coli O157:H7).